A 368-amino-acid chain; its full sequence is 4-hydroxy-3-methylbut-2-en-1-yl diphosphate synthase (flavodoxin) (368 aa).

[4Fe-4S] cluster-binding residues include Cys268, Cys271, Cys303, and Glu310.

Belongs to the IspG family. Requires [4Fe-4S] cluster as cofactor.

The catalysed reaction is (2E)-4-hydroxy-3-methylbut-2-enyl diphosphate + oxidized [flavodoxin] + H2O + 2 H(+) = 2-C-methyl-D-erythritol 2,4-cyclic diphosphate + reduced [flavodoxin]. Its pathway is isoprenoid biosynthesis; isopentenyl diphosphate biosynthesis via DXP pathway; isopentenyl diphosphate from 1-deoxy-D-xylulose 5-phosphate: step 5/6. Functionally, converts 2C-methyl-D-erythritol 2,4-cyclodiphosphate (ME-2,4cPP) into 1-hydroxy-2-methyl-2-(E)-butenyl 4-diphosphate. The protein is 4-hydroxy-3-methylbut-2-en-1-yl diphosphate synthase (flavodoxin) of Listeria monocytogenes serotype 4b (strain F2365).